A 213-amino-acid polypeptide reads, in one-letter code: MVEETTLDLVKQLIEGSPERKFSESLDIAINLKNLDMSQPKNRVDEEIILPNGLGKTMKIAVFAKGEVGLNAKDAGCDYILTEEDIKELGEDKSKARSLANECDFFIAEVQYMAQIGKALGAILGPRGKMPVPLTPDKNVADLINSTKNSVRIRSKDKLTFHVSVGRRDMDVEKLAENIETVLGRLEHSLEKGKHNLKSVYVTTTMGNSVRLV.

The protein belongs to the universal ribosomal protein uL1 family. As to quaternary structure, part of the 50S ribosomal subunit.

Functionally, binds directly to 23S rRNA. Probably involved in E site tRNA release. Its function is as follows. Protein L1 is also a translational repressor protein, it controls the translation of its operon by binding to its mRNA. This Methanococcoides burtonii (strain DSM 6242 / NBRC 107633 / OCM 468 / ACE-M) protein is Large ribosomal subunit protein uL1.